We begin with the raw amino-acid sequence, 549 residues long: CTP synthase (549 aa).

The tract at residues 1-267 is amidoligase domain; that stretch reads MAKFVFITGG…CREVLDVLQL (267 aa). A CTP-binding site is contributed by serine 13. UTP is bound at residue serine 13. Residues 14–19 and aspartate 71 each bind ATP; that span reads SIGKGI. 2 residues coordinate Mg(2+): aspartate 71 and glutamate 141. Residues 148–150, 188–193, and lysine 224 contribute to the CTP site; these read DIE and KTKPTQ. Residues 188 to 193 and lysine 224 each bind UTP; that span reads KTKPTQ. The Glutamine amidotransferase type-1 domain occupies 292 to 534; the sequence is KVALVGKYVQ…IEAAQQRLPD (243 aa). Position 354 (glycine 354) interacts with L-glutamine. The active-site Nucleophile; for glutamine hydrolysis is cysteine 381. L-glutamine contacts are provided by residues 382-385, glutamate 405, and arginine 462; that span reads LGMQ. Active-site residues include histidine 507 and glutamate 509.

Belongs to the CTP synthase family. In terms of assembly, homotetramer.

It carries out the reaction UTP + L-glutamine + ATP + H2O = CTP + L-glutamate + ADP + phosphate + 2 H(+). The enzyme catalyses L-glutamine + H2O = L-glutamate + NH4(+). It catalyses the reaction UTP + NH4(+) + ATP = CTP + ADP + phosphate + 2 H(+). It functions in the pathway pyrimidine metabolism; CTP biosynthesis via de novo pathway; CTP from UDP: step 2/2. Its activity is regulated as follows. Allosterically activated by GTP, when glutamine is the substrate; GTP has no effect on the reaction when ammonia is the substrate. The allosteric effector GTP functions by stabilizing the protein conformation that binds the tetrahedral intermediate(s) formed during glutamine hydrolysis. Inhibited by the product CTP, via allosteric rather than competitive inhibition. Its function is as follows. Catalyzes the ATP-dependent amination of UTP to CTP with either L-glutamine or ammonia as the source of nitrogen. Regulates intracellular CTP levels through interactions with the four ribonucleotide triphosphates. This is CTP synthase from Synechococcus sp. (strain CC9902).